Consider the following 306-residue polypeptide: Large ribosomal subunit protein uL2m (306 aa).

The transit peptide at 1–60 (MALRVVTRALGSLSLTPRIAAVPGPSLLPAAQVTNNVLLQLPSASMLLPSRPLLTSVALS) directs the protein to the mitochondrion.

It belongs to the universal ribosomal protein uL2 family. As to quaternary structure, component of the mitochondrial ribosome large subunit (39S) which comprises a 16S rRNA and about 50 distinct proteins.

The protein resides in the mitochondrion. This Bos taurus (Bovine) protein is Large ribosomal subunit protein uL2m (MRPL2).